The following is a 208-amino-acid chain: Small ribosomal subunit protein uS4 (208 aa).

One can recognise an S4 RNA-binding domain in the interval 98–160 (RRIDNTVYRL…SRQLQMINEA (63 aa)).

It belongs to the universal ribosomal protein uS4 family. Part of the 30S ribosomal subunit. Contacts protein S5. The interaction surface between S4 and S5 is involved in control of translational fidelity.

One of the primary rRNA binding proteins, it binds directly to 16S rRNA where it nucleates assembly of the body of the 30S subunit. In terms of biological role, with S5 and S12 plays an important role in translational accuracy. The sequence is that of Small ribosomal subunit protein uS4 from Syntrophobacter fumaroxidans (strain DSM 10017 / MPOB).